The sequence spans 88 residues: UPF0250 protein Sputcn32_2874 (88 aa).

The protein belongs to the UPF0250 family.

The protein is UPF0250 protein Sputcn32_2874 of Shewanella putrefaciens (strain CN-32 / ATCC BAA-453).